We begin with the raw amino-acid sequence, 495 residues long: MKSSVEQQSATRVKLTVEVPFDELQPEIDQAYRSLAQQVTLPGFRKGKVPPRVLEARLGRGAILDQAINNMLPSRYSQAVEEHDLKVLTQPTIDITRLEDNELVEFTAEADVRPEIDLPDFSTIEVEVDPLVADDAAVDAELDNLRARFGTLKAVERPVQKDDFVSIDLSATVGGEPVDEATTEGLSHQVGNGELIEGLDDALEGMKVDESKTFKSNLVAGDHEGEEAEVTVTVKSLKERELPEADDDFAQLASEFDTIGELRESLAKQVEENKKAEQASSIRDKVLEKALEKTDFELPEAVVEEQVKGQLNQLLQQFNGDEKAFDQLLAAQGSSREQFDRDTRSSAEEAVRTQLFLDTLADELQPEVSQQEFTEHIMFTAQRYGMEPQQFMQAIQASDQIGALYADVRRGKALAESICTVSVKDTDGNEIDPKEYFGEEENTDETSTGSADAEASENSEATPSGTETEESAEFDQAAEAPVATPTDDDSENAEK.

The PPIase FKBP-type domain maps to 162-243 (DDFVSIDLSA…VKSLKERELP (82 aa)). Basic and acidic residues predominate over residues 425-437 (DTDGNEIDPKEYF). Positions 425–495 (DTDGNEIDPK…TDDDSENAEK (71 aa)) are disordered. The segment covering 450–461 (SADAEASENSEA) has biased composition (low complexity). Positions 486-495 (TDDDSENAEK) are enriched in acidic residues.

Belongs to the FKBP-type PPIase family. Tig subfamily.

The protein resides in the cytoplasm. The enzyme catalyses [protein]-peptidylproline (omega=180) = [protein]-peptidylproline (omega=0). In terms of biological role, involved in protein export. Acts as a chaperone by maintaining the newly synthesized protein in an open conformation. Functions as a peptidyl-prolyl cis-trans isomerase. The protein is Trigger factor of Corynebacterium kroppenstedtii (strain DSM 44385 / JCM 11950 / CIP 105744 / CCUG 35717).